The sequence spans 711 residues: Polyribonucleotide nucleotidyltransferase (711 aa).

Positions 486 and 492 each coordinate Mg(2+). Residues 553 to 612 enclose the KH domain; that stretch reads PRIHTIKINPDKIKDVIGKGGSVIRALTEETGTTIEIEDDGTVKIAATDGEKAKHAIRRI. The 69-residue stretch at 622–690 folds into the S1 motif domain; the sequence is GRIYNGKVTR…RQGRVRLSIK (69 aa). Residues 690–711 form a disordered region; that stretch reads KEATEQSQPAAAPEAPAAEQGE. Positions 694-711 are enriched in low complexity; the sequence is EQSQPAAAPEAPAAEQGE.

The protein belongs to the polyribonucleotide nucleotidyltransferase family. As to quaternary structure, component of the RNA degradosome, which is a multiprotein complex involved in RNA processing and mRNA degradation. Requires Mg(2+) as cofactor.

It is found in the cytoplasm. The catalysed reaction is RNA(n+1) + phosphate = RNA(n) + a ribonucleoside 5'-diphosphate. Functionally, involved in mRNA degradation. Catalyzes the phosphorolysis of single-stranded polyribonucleotides processively in the 3'- to 5'-direction. This chain is Polyribonucleotide nucleotidyltransferase, found in Citrobacter koseri (strain ATCC BAA-895 / CDC 4225-83 / SGSC4696).